Consider the following 152-residue polypeptide: CMT1A duplicated region transcript 4 protein (152 aa).

The span at 1–11 (MDARRMKKEEG) shows a compositional bias: basic and acidic residues. Disordered regions lie at residues 1-23 (MDAR…RKLL) and 60-89 (ERPW…GKAV). A compositionally biased stretch (polar residues) spans 65–74 (SRQNKPSSVI).

In terms of tissue distribution, expressed in fetal skeletal muscle and kidney.

This chain is CMT1A duplicated region transcript 4 protein (CDRT4), found in Homo sapiens (Human).